The chain runs to 468 residues: Putative chitinase 1 (468 aa).

The signal sequence occupies residues 1 to 21; sequence MDFYSSLLPFLILIYLEFCSG. Residues 22 to 381 form the GH18 domain; the sequence is FNRVCYYNGW…MSIIHGLGEY (360 aa). A disulfide bridge links C26 with C51. Residues 73–74 and 100–103 contribute to the chitin site; these read VF and GGWD. E143 serves as the catalytic Proton donor. Residues Y144, 213–216, and W353 contribute to the chitin site; that span reads KMYD. The stretch at 386 to 440 forms a coiled coil; that stretch reads SDTLEAEREMINKKIRKAAREISYYSDKGNSTMAKKMEDKLNQLKDHLSAVQAHQ.

The protein belongs to the glycosyl hydrolase 18 family. In terms of tissue distribution, prismatic layer of shell (at protein level). Expressed primarily in the mantle with highest level in the outer epithelium of the mantle edge and lower level in the mantle pallium.

It localises to the secreted. The enzyme catalyses Random endo-hydrolysis of N-acetyl-beta-D-glucosaminide (1-&gt;4)-beta-linkages in chitin and chitodextrins.. This chain is Putative chitinase 1, found in Margaritifera margaritifera (Freshwater pearl mussel).